Here is a 77-residue protein sequence, read N- to C-terminus: Apelin (77 aa).

A signal peptide spans 1 to 22 (MNLRLCVQALLLLWLSLTAVCG). Positions 23–41 (VPLMLPPDGTGLEEGSMRY) are excised as a propeptide. Residues 46 to 77 (RTSRTGPGAWQGGRRKFRRQRPRLSHKGPMPF) form a disordered region. Basic residues predominate over residues 58 to 71 (GRRKFRRQRPRLSH).

This sequence belongs to the apelin family. Post-translationally, several active peptides may be produced by proteolytic processing of the peptide precursor. In terms of tissue distribution, expressed in extraembryonic visceral endoderm and in the primitive streak at 6.5 and 7.5 dpc. Expressed in the anterior visceral yolk sac at 8.25 dpc. Expressed weakly in the embryonic heart at 11.5 dpc. Expressed in the adult heart. Expressed in endothelial cells and cardiomyocytes and weakly expressed in fibroblasts.

It localises to the secreted. The protein resides in the extracellular space. In terms of biological role, peptide hormone that functions as endogenous ligand for the G-protein-coupled apelin receptor (APLNR/APJ). Functions as a balanced agonist activating both G(i) protein pathway and beta-arrestin pathway of APLNR. Downstream G proteins activation, apelin can inhibit cAMP production and activate key intracellular effectors such as ERKs. On the other hand, APLNR activation induces beta-arrestin recruitment to the membrane leading to desensitization and internalization of the receptor. Apelin also blunts mechanical stretch-induced hypertrophic induction from APLNR. Apelin-36 dissociates more hardly than (pyroglu)apelin-13 from APLNR. Involved in the regulation of cardiac precursor cell movements during gastrulation and heart morphogenesis. Has an inhibitory effect on cytokine production in response to T-cell receptor/CD3 cross-linking; the oral intake of apelin in the colostrum and the milk might therefore modulate immune responses in neonates. Plays a role in early coronary blood vessels formation. Mediates myocardial contractility in an ERK1/2-dependent manner. May also have a role in the central control of body fluid homeostasis by influencing vasopressin release and drinking behavior. The chain is Apelin from Mus musculus (Mouse).